The primary structure comprises 199 residues: 7-methyl-GTP pyrophosphatase (199 aa).

D76 functions as the Proton acceptor in the catalytic mechanism.

Belongs to the Maf family. YceF subfamily. A divalent metal cation is required as a cofactor.

The protein localises to the cytoplasm. It carries out the reaction N(7)-methyl-GTP + H2O = N(7)-methyl-GMP + diphosphate + H(+). Functionally, nucleoside triphosphate pyrophosphatase that hydrolyzes 7-methyl-GTP (m(7)GTP). May have a dual role in cell division arrest and in preventing the incorporation of modified nucleotides into cellular nucleic acids. The chain is 7-methyl-GTP pyrophosphatase from Rhizobium johnstonii (strain DSM 114642 / LMG 32736 / 3841) (Rhizobium leguminosarum bv. viciae).